The sequence spans 391 residues: Pyoverdine export membrane fusion protein PvdR (391 aa).

An N-terminal signal peptide occupies residues 1–24 (MRRTRSTRRALLVAVCLSPLIALA). The stretch at 108-180 (IEMLKAQLAE…QASLRSDEAE (73 aa)) forms a coiled coil. Positions 263 to 289 (LPVPPKPLDQSNQGGGSPTSGSGGQSG) are disordered. The span at 275-289 (QGGGSPTSGSGGQSG) shows a compositional bias: gly residues.

This sequence belongs to the membrane fusion protein (MFP) (TC 8.A.1) family. In terms of assembly, part of the tripartite efflux system PvdRT-OpmQ, which is composed of an inner membrane component with both ATPase and permease domains, PvdT, a periplasmic membrane fusion protein, PvdR, and an outer membrane component, OpmQ.

The protein resides in the periplasm. Its function is as follows. Part of the tripartite efflux system PvdRT-OpmQ required for the secretion into the extracellular milieu of the siderophore pyoverdine (PVD), which is involved in iron acquisition. This subunit is an adapter protein that stimulates the ATPase activity of PvdT and connects the inner and outer membrane components. The system is responsible for export of newly synthesized PVD after the final steps of biosynthesis have taken place in the periplasm. It is also responsible for recycling of PVD after internalization of ferri-PVD into the periplasm by the outer-membrane receptor FpvA and release of iron from PVD, thus making PVD available for new cycles of iron uptake. In addition, can expel unwanted metals complexed with PVD from the periplasm into the extracellular medium. Does not contribute to resistance to antibiotics belonging to the classes of tetracyclines, aminoglycosides, beta-lactams and macrolides, and chloramphenicol. In Pseudomonas aeruginosa (strain ATCC 15692 / DSM 22644 / CIP 104116 / JCM 14847 / LMG 12228 / 1C / PRS 101 / PAO1), this protein is Pyoverdine export membrane fusion protein PvdR.